We begin with the raw amino-acid sequence, 336 residues long: Dihydroorotate dehydrogenase (quinone) (336 aa).

FMN is bound by residues 62–66 and Thr86; that span reads AGLEK. Residue Lys66 coordinates substrate. 111-115 provides a ligand contact to substrate; that stretch reads NRMGF. Residues Asn139 and Asn172 each contribute to the FMN site. Asn172 serves as a coordination point for substrate. Residue Ser175 is the Nucleophile of the active site. Asn177 is a substrate binding site. FMN is bound by residues Lys217 and Thr245. Position 246–247 (246–247) interacts with substrate; it reads NT. FMN contacts are provided by residues Gly268, Gly297, and 318–319; that span reads YS.

This sequence belongs to the dihydroorotate dehydrogenase family. Type 2 subfamily. Monomer. It depends on FMN as a cofactor.

The protein localises to the cell membrane. The enzyme catalyses (S)-dihydroorotate + a quinone = orotate + a quinol. The protein operates within pyrimidine metabolism; UMP biosynthesis via de novo pathway; orotate from (S)-dihydroorotate (quinone route): step 1/1. Catalyzes the conversion of dihydroorotate to orotate with quinone as electron acceptor. The sequence is that of Dihydroorotate dehydrogenase (quinone) from Aliivibrio salmonicida (strain LFI1238) (Vibrio salmonicida (strain LFI1238)).